Consider the following 325-residue polypeptide: Oligopeptide transport system permease protein OppB (325 aa).

Transmembrane regions (helical) follow at residues 12–32, 102–122, 135–155, 189–208, 248–268, and 290–310; these read YLVL…LAFS, LVVG…WGAI, LALL…ILGA, LQHL…AGFS, IPMA…AVFV, and TNIV…AGLL. Positions 95–311 constitute an ABC transmembrane type-1 domain; that stretch reads IGVSLRLLVV…AVVLLAGLLS (217 aa).

This sequence belongs to the binding-protein-dependent transport system permease family. OppBC subfamily. In terms of assembly, the complex is composed of an ATP-binding protein (OppD), two transmembrane proteins (OppB and OppC) and a solute-binding protein (OppA).

The protein resides in the cell inner membrane. Part of the ABC transporter complex OppABCD involved in the uptake of oligopeptides. Responsible for the translocation of the substrate across the membrane. This Mycobacterium bovis (strain ATCC BAA-935 / AF2122/97) protein is Oligopeptide transport system permease protein OppB.